Reading from the N-terminus, the 758-residue chain is MLYFSRWKSALIWLAVLVSLIIASPNFFSRETLENLPDFLPKKQVSLGLDLSGGSRLILQVQNAGKTDLETTANIMRQRLEELGYGNPVVEGEGRNQIRVEVPGLYDAQLLKDILTIRGNLSFRAMDDTMSPDDAIRGTPPADSEIVYSFDDPPVGYLLKKTPILTGHDITDAKASISADDGQPVITLTLDDNGRRRLADLTAQGNENSFAIVVDNQVVSAPTVSGPLDTSELQIEGAFDLQAANNMAVVLRSGALPQAVTVLEERTIASALGEDYASAAVLAALLAALVVGLFMVLSYGILGVIALVALVVNIVILTAVLSLIGASISLASIAGLVLTIGLAVDAHILIYERVREDRRKGYSVVQAMESGFYRALSTIVDANLTTLIAALVLFLLGSGTVHGFALTVAIGIGTTLFTTLTFTRLLIAQWVRTAKPKEVPKRRLKLVPTVTHIPFMRLQFVTLGISVLACAIVVALFVNIGFNYGIDFRGGSMVELQARNGDANLEDINERLAELNIDSARVLPAKSPRSALVIIGSQEVGDDAEQTVAVKLRGEFEQDYSFQRVDVVGPTVSEQLSRAGVLAVILSLIGIFIYVWFRFRWQLALGAVLSTLHDVVILSGMFIVFRMEFNLWSVAAILTIIGYSLNDTVVIYDRVRENLRRYKSAPLPAIIDASINQTLSRTLLTSFVTFLAHVPLYAFGGSEIRMFALALSVGIIVASYSSIFIAAPLLVQFGLKPRETDAGDAVDAELAQSLNLES.

Helical transmembrane passes span 9-29 (SALI…NFFS), 277-297 (ASAA…FMVL), 301-321 (ILGV…TAVL), 324-344 (IGAS…GLAV), 372-394 (FYRA…LVLF), 404-426 (FALT…TRLL), 460-480 (FVTL…FVNI), 579-599 (AGVL…WFRF), 605-625 (LGAV…FIVF), 631-651 (LWSV…TVVI), 682-702 (TLLT…FGGS), and 706-726 (MFAL…IFIA).

This sequence in the N-terminal section; belongs to the SecD/SecF family. SecD subfamily. It in the C-terminal section; belongs to the SecD/SecF family. SecF subfamily. Part of the essential Sec protein translocation apparatus which comprises SecA, SecYEG and auxiliary proteins SecDF-YajC and YidC.

Its subcellular location is the cell inner membrane. Its function is as follows. Part of the Sec protein translocase complex. Interacts with the SecYEG preprotein conducting channel. SecDF uses the proton motive force (PMF) to complete protein translocation after the ATP-dependent function of SecA. This is Protein translocase subunit SecDF (secDF) from Brucella abortus biovar 1 (strain 9-941).